Reading from the N-terminus, the 160-residue chain is MD-2-related lipid-recognition protein ROSY1 (160 aa).

The first 23 residues, 1–23 (MAISHTQLLLLLLVSLFFSPALC), serve as a signal peptide directing secretion.

In terms of assembly, interacts with SYT1. As to expression, expressed exclusively in roots, in epidermis and cortex cells of the root elongation zone, and lateral root cap cells at the root tip.

The protein resides in the cytoplasm. In terms of biological role, involved in the regulation of gravitropic response and basipetal auxin transport in roots. Involved in salt stress tolerance. May facilitate membrane trafficking and asymmetric cell elongation via SYT1. Binds stigmasterol and dipalmitoyl phosphoethanolamine (DPPE) in vitro. This chain is MD-2-related lipid-recognition protein ROSY1, found in Arabidopsis thaliana (Mouse-ear cress).